The primary structure comprises 752 residues: Translation initiation factor IF-2 (752 aa).

The tract at residues 26-167 is disordered; that stretch reads RQGMGVKSHM…QPTQRKDKPL (142 aa). Positions 34-47 are enriched in polar residues; the sequence is HMSSVTPDQAQQLR. Low complexity predominate over residues 72–81; that stretch reads KQNNHQAQNH. Over residues 83–96 the composition is skewed to basic and acidic residues; that stretch reads QHHDHDKTQNERPQ. Residues 101 to 129 are compositionally biased toward polar residues; sequence SRSNNGTKDNNQHQNNGGRFGGSLNNDQG. Over residues 131–150 the composition is skewed to basic residues; that stretch reads NGKRFNKKNKKNKKHNKNKR. Over residues 151-167 the composition is skewed to basic and acidic residues; the sequence is LREVAHKQPTQRKDKPL. Positions 253–422 constitute a tr-type G domain; sequence TRPAVVTVMG…LLQAEMLELK (170 aa). The interval 262 to 269 is G1; it reads GHVDHGKT. A GTP-binding site is contributed by 262-269; the sequence is GHVDHGKT. Positions 287 to 291 are G2; sequence GITQE. The segment at 308–311 is G3; that stretch reads DTPG. GTP-binding positions include 308–312 and 362–365; these read DTPGH and NKID. Residues 362–365 are G4; it reads NKID. Residues 398 to 400 form a G5 region; it reads SAK.

This sequence belongs to the TRAFAC class translation factor GTPase superfamily. Classic translation factor GTPase family. IF-2 subfamily.

It is found in the cytoplasm. In terms of biological role, one of the essential components for the initiation of protein synthesis. Protects formylmethionyl-tRNA from spontaneous hydrolysis and promotes its binding to the 30S ribosomal subunits. Also involved in the hydrolysis of GTP during the formation of the 70S ribosomal complex. This chain is Translation initiation factor IF-2, found in Limosilactobacillus reuteri (strain DSM 20016) (Lactobacillus reuteri).